A 436-amino-acid chain; its full sequence is UDP-N-acetylmuramate--L-alanine ligase (436 aa).

108 to 114 (GAHGKTS) lines the ATP pocket.

Belongs to the MurCDEF family.

The protein localises to the cytoplasm. It carries out the reaction UDP-N-acetyl-alpha-D-muramate + L-alanine + ATP = UDP-N-acetyl-alpha-D-muramoyl-L-alanine + ADP + phosphate + H(+). It functions in the pathway cell wall biogenesis; peptidoglycan biosynthesis. Its function is as follows. Cell wall formation. This chain is UDP-N-acetylmuramate--L-alanine ligase, found in Bacillus cereus (strain G9842).